The following is a 386-amino-acid chain: 1-deoxy-D-xylulose 5-phosphate reductoisomerase (386 aa).

T10, G11, S12, I13, G36, N38, and N122 together coordinate NADPH. Position 123 (K123) interacts with 1-deoxy-D-xylulose 5-phosphate. An NADPH-binding site is contributed by E124. D148 contacts Mn(2+). Residues S149, E150, S174, and H197 each contribute to the 1-deoxy-D-xylulose 5-phosphate site. Mn(2+) is bound at residue E150. An NADPH-binding site is contributed by G203. Residues S210, N215, K216, and E219 each contribute to the 1-deoxy-D-xylulose 5-phosphate site. E219 contacts Mn(2+).

The protein belongs to the DXR family. Requires Mg(2+) as cofactor. Mn(2+) is required as a cofactor.

The enzyme catalyses 2-C-methyl-D-erythritol 4-phosphate + NADP(+) = 1-deoxy-D-xylulose 5-phosphate + NADPH + H(+). The protein operates within isoprenoid biosynthesis; isopentenyl diphosphate biosynthesis via DXP pathway; isopentenyl diphosphate from 1-deoxy-D-xylulose 5-phosphate: step 1/6. Catalyzes the NADPH-dependent rearrangement and reduction of 1-deoxy-D-xylulose-5-phosphate (DXP) to 2-C-methyl-D-erythritol 4-phosphate (MEP). In Geobacter sulfurreducens (strain ATCC 51573 / DSM 12127 / PCA), this protein is 1-deoxy-D-xylulose 5-phosphate reductoisomerase.